The sequence spans 293 residues: uncharacterized protein (293 aa).

It to M.jannaschii MJ1614 and MJ0008.

This is an uncharacterized protein from Methanocaldococcus jannaschii (strain ATCC 43067 / DSM 2661 / JAL-1 / JCM 10045 / NBRC 100440) (Methanococcus jannaschii).